The chain runs to 397 residues: MPRGDFVDPPPVNWDLVKDEALWKILSGAAERQIDCKNADRFEVSVDFLLQQVAWLTERHASQVRAQVRKATAAVRNSGPSPVPSGEPAGSGHQRAHSALSFRRDSPRNEAGSGTGTPLHSSMRPLVARNTSTNTTVLRDMTGAPASPRPGVGLASRAGDRRRLSSLPITSVPDKSLEQTAQPELSPEERSPSPGPAEDSSPTSSDDESIPAQSRIIRRPPRYQPPDGGQYEDDDDDESEPAFQPYTSPSSKTSAQDLGSTLRGDKPVSGKRPHKSHGKPAIHKSNTSDSSASSAAIIQKPDKTDRSTEQRTPGPLSPHRPAELTGRSPGGKDKGYSREGSEGTPSMGSSYSDLDDASVTQSALEEALASHMNSRGAGSRFSISQAFRSRYTSSSNQ.

The disordered stretch occupies residues 71–397; the sequence is ATAAVRNSGP…RSRYTSSSNQ (327 aa). A compositionally biased stretch (acidic residues) spans 230 to 240; sequence QYEDDDDDESE. The span at 245-259 shows a compositional bias: polar residues; it reads PYTSPSSKTSAQDLG. A compositionally biased stretch (basic residues) spans 269–282; that stretch reads SGKRPHKSHGKPAI. Composition is skewed to basic and acidic residues over residues 300–309 and 330–341; these read KPDKTDRSTE and GGKDKGYSREGS. Composition is skewed to polar residues over residues 343-363 and 381-397; these read GTPS…TQSA and FSIS…SSNQ.

This sequence belongs to the ATG29 family. As to quaternary structure, forms a stable complex with ATG17 and ATG31. Interacts directly with ATG31. The ATG17-ATG29-ATG31 complex interacts with the ATG1-ATG13 complex. Note=The interaction with the ATG1-ATG13 complex is induced by starvation.

The protein resides in the preautophagosomal structure. Plays a role in autophagy. Functions at the preautophagosomal structure (PAS) in order to form normal autophagosomes under starvation conditions. Also plays a role in mitophagy. Autophagy is required for proper vegetative growth, asexual/sexual reproduction, and full virulence. Autophagy is particularly involved in the biosynthesis of deoxynivalenol (DON), an important virulence determinant. The sequence is that of Autophagy-related protein 29 from Gibberella zeae (strain ATCC MYA-4620 / CBS 123657 / FGSC 9075 / NRRL 31084 / PH-1) (Wheat head blight fungus).